Reading from the N-terminus, the 249-residue chain is Small ribosomal subunit protein eS6 (249 aa).

Positions 223–238 (LRQRDHSKKHTQKVHA) are enriched in basic residues. A disordered region spans residues 223 to 249 (LRQRDHSKKHTQKVHAQRAEVAAFQKK).

This sequence belongs to the eukaryotic ribosomal protein eS6 family. Component of the small ribosomal subunit. Part of the small subunit (SSU) processome, composed of more than 70 proteins and the RNA chaperone small nucleolar RNA (snoRNA) U3. In terms of processing, ribosomal protein S6 is the major substrate of protein kinases in eukaryote ribosomes.

The protein resides in the cytoplasm. It is found in the nucleus. Its subcellular location is the nucleolus. Its function is as follows. Component of the 40S small ribosomal subunit. Plays an important role in controlling cell growth and proliferation through the selective translation of particular classes of mRNA. Part of the small subunit (SSU) processome, first precursor of the small eukaryotic ribosomal subunit. During the assembly of the SSU processome in the nucleolus, many ribosome biogenesis factors, an RNA chaperone and ribosomal proteins associate with the nascent pre-rRNA and work in concert to generate RNA folding, modifications, rearrangements and cleavage as well as targeted degradation of pre-ribosomal RNA by the RNA exosome. This chain is Small ribosomal subunit protein eS6 (RPS6), found in Leishmania infantum.